A 263-amino-acid chain; its full sequence is Ribosomal RNA small subunit methyltransferase A (263 aa).

Residues asparagine 13, threonine 15, glycine 40, glutamate 61, aspartate 85, and asparagine 105 each contribute to the S-adenosyl-L-methionine site.

It belongs to the class I-like SAM-binding methyltransferase superfamily. rRNA adenine N(6)-methyltransferase family. RsmA subfamily.

It localises to the cytoplasm. The catalysed reaction is adenosine(1518)/adenosine(1519) in 16S rRNA + 4 S-adenosyl-L-methionine = N(6)-dimethyladenosine(1518)/N(6)-dimethyladenosine(1519) in 16S rRNA + 4 S-adenosyl-L-homocysteine + 4 H(+). Its function is as follows. Specifically dimethylates two adjacent adenosines (A1518 and A1519) in the loop of a conserved hairpin near the 3'-end of 16S rRNA in the 30S particle. May play a critical role in biogenesis of 30S subunits. This Mycoplasma pneumoniae (strain ATCC 29342 / M129 / Subtype 1) (Mycoplasmoides pneumoniae) protein is Ribosomal RNA small subunit methyltransferase A.